A 102-amino-acid chain; its full sequence is Large ribosomal subunit protein uL23 (102 aa).

Belongs to the universal ribosomal protein uL23 family. Part of the 50S ribosomal subunit. Contacts protein L29, and trigger factor when it is bound to the ribosome.

Functionally, one of the early assembly proteins it binds 23S rRNA. One of the proteins that surrounds the polypeptide exit tunnel on the outside of the ribosome. Forms the main docking site for trigger factor binding to the ribosome. The protein is Large ribosomal subunit protein uL23 of Chromobacterium violaceum (strain ATCC 12472 / DSM 30191 / JCM 1249 / CCUG 213 / NBRC 12614 / NCIMB 9131 / NCTC 9757 / MK).